The primary structure comprises 306 residues: Porphobilinogen deaminase (306 aa).

C239 carries the post-translational modification S-(dipyrrolylmethanemethyl)cysteine.

Belongs to the HMBS family. In terms of assembly, monomer. Dipyrromethane is required as a cofactor.

It carries out the reaction 4 porphobilinogen + H2O = hydroxymethylbilane + 4 NH4(+). It participates in porphyrin-containing compound metabolism; protoporphyrin-IX biosynthesis; coproporphyrinogen-III from 5-aminolevulinate: step 2/4. Its function is as follows. Tetrapolymerization of the monopyrrole PBG into the hydroxymethylbilane pre-uroporphyrinogen in several discrete steps. The protein is Porphobilinogen deaminase (hemC) of Helicobacter pylori (strain ATCC 700392 / 26695) (Campylobacter pylori).